Reading from the N-terminus, the 428-residue chain is GTPase Obg (428 aa).

Residues 1–158 (MFVDQVKIYV…RDVILELKVL (158 aa)) enclose the Obg domain. Residues 159–329 (ADVGLVGFPS…LLFEVANLIE (171 aa)) enclose the OBG-type G domain. Residues 165–172 (GFPSVGKS), 190–194 (FTTIV), 212–215 (DLPG), 282–285 (NKMD), and 310–312 (SAV) each bind GTP. Residues serine 172 and threonine 192 each contribute to the Mg(2+) site. In terms of domain architecture, OCT spans 350-428 (KFETEGVKFD…ILEYEFEFID (79 aa)).

Belongs to the TRAFAC class OBG-HflX-like GTPase superfamily. OBG GTPase family. Monomer. Mg(2+) is required as a cofactor.

The protein resides in the cytoplasm. An essential GTPase which binds GTP, GDP and possibly (p)ppGpp with moderate affinity, with high nucleotide exchange rates and a fairly low GTP hydrolysis rate. Plays a role in control of the cell cycle, stress response, ribosome biogenesis and in those bacteria that undergo differentiation, in morphogenesis control. The polypeptide is GTPase Obg (Bacillus cereus (strain AH820)).